We begin with the raw amino-acid sequence, 150 residues long: Ribosome maturation factor RimP (150 aa).

It belongs to the RimP family.

The protein localises to the cytoplasm. Its function is as follows. Required for maturation of 30S ribosomal subunits. The sequence is that of Ribosome maturation factor RimP from Acidithiobacillus ferrooxidans (strain ATCC 23270 / DSM 14882 / CIP 104768 / NCIMB 8455) (Ferrobacillus ferrooxidans (strain ATCC 23270)).